Consider the following 256-residue polypeptide: uncharacterized protein (256 aa).

Positions 1–22 (MGYLKRFALYISVMILIFAIAG) are cleaved as a signal peptide. Residue Cys23 is the site of N-palmitoyl cysteine attachment. A lipid anchor (S-diacylglycerol cysteine) is attached at Cys23.

The protein belongs to the staphylococcal tandem lipoprotein family.

Its subcellular location is the cell membrane. This is an uncharacterized protein from Staphylococcus aureus (strain COL).